Consider the following 339-residue polypeptide: Ketol-acid reductoisomerase (NADP(+)) (339 aa).

The region spanning 1–182 (MRVYYDRDAD…GGGRSGIIET (182 aa)) is the KARI N-terminal Rossmann domain. NADP(+)-binding positions include 24–27 (YGSQ), R48, S51, S53, and 83–86 (DELQ). The active site involves H108. G134 lines the NADP(+) pocket. Residues 183–328 (TFREECETDL…GRLRAMMPWI (146 aa)) form the KARI C-terminal knotted domain. D191, E195, E227, and E231 together coordinate Mg(2+). S252 is a binding site for substrate.

The protein belongs to the ketol-acid reductoisomerase family. Requires Mg(2+) as cofactor.

It carries out the reaction (2R)-2,3-dihydroxy-3-methylbutanoate + NADP(+) = (2S)-2-acetolactate + NADPH + H(+). It catalyses the reaction (2R,3R)-2,3-dihydroxy-3-methylpentanoate + NADP(+) = (S)-2-ethyl-2-hydroxy-3-oxobutanoate + NADPH + H(+). It participates in amino-acid biosynthesis; L-isoleucine biosynthesis; L-isoleucine from 2-oxobutanoate: step 2/4. Its pathway is amino-acid biosynthesis; L-valine biosynthesis; L-valine from pyruvate: step 2/4. Its function is as follows. Involved in the biosynthesis of branched-chain amino acids (BCAA). Catalyzes an alkyl-migration followed by a ketol-acid reduction of (S)-2-acetolactate (S2AL) to yield (R)-2,3-dihydroxy-isovalerate. In the isomerase reaction, S2AL is rearranged via a Mg-dependent methyl migration to produce 3-hydroxy-3-methyl-2-ketobutyrate (HMKB). In the reductase reaction, this 2-ketoacid undergoes a metal-dependent reduction by NADPH to yield (R)-2,3-dihydroxy-isovalerate. The sequence is that of Ketol-acid reductoisomerase (NADP(+)) from Rhodospirillum rubrum (strain ATCC 11170 / ATH 1.1.1 / DSM 467 / LMG 4362 / NCIMB 8255 / S1).